The chain runs to 232 residues: Large ribosomal subunit protein uL1 (232 aa).

This sequence belongs to the universal ribosomal protein uL1 family. In terms of assembly, part of the 50S ribosomal subunit.

Functionally, binds directly to 23S rRNA. The L1 stalk is quite mobile in the ribosome, and is involved in E site tRNA release. In terms of biological role, protein L1 is also a translational repressor protein, it controls the translation of the L11 operon by binding to its mRNA. The sequence is that of Large ribosomal subunit protein uL1 from Bacteroides thetaiotaomicron (strain ATCC 29148 / DSM 2079 / JCM 5827 / CCUG 10774 / NCTC 10582 / VPI-5482 / E50).